The following is a 600-amino-acid chain: Methionine--tRNA ligase (600 aa).

A 'HIGH' region motif is present at residues 11 to 21 (PYANGPRHIGH). Positions 143, 146, 156, and 159 each coordinate Zn(2+). The short motif at 351–355 (KFSSS) is the 'KMSKS' region element. Ser354 lines the ATP pocket.

It belongs to the class-I aminoacyl-tRNA synthetase family. MetG type 1 subfamily. As to quaternary structure, monomer. It depends on Zn(2+) as a cofactor.

The protein resides in the cytoplasm. The enzyme catalyses tRNA(Met) + L-methionine + ATP = L-methionyl-tRNA(Met) + AMP + diphosphate. Is required not only for elongation of protein synthesis but also for the initiation of all mRNA translation through initiator tRNA(fMet) aminoacylation. This is Methionine--tRNA ligase from Salinispora arenicola (strain CNS-205).